Here is a 560-residue protein sequence, read N- to C-terminus: Transcription termination factor 5, mitochondrial (560 aa).

A mitochondrion-targeting transit peptide spans 1 to 23 (MLRNGQNQAQLLARSLGQLARGM). The disordered stretch occupies residues 23–47 (MASSKRVSSKKEDLKPKLPKPPTVE).

Belongs to the mTERF family. Probably binds to the mTTF-DNA complex.

Its subcellular location is the mitochondrion. Its function is as follows. Binds promoter DNA and regulates initiation of transcription. Regulates mitochondrial replication and transcription. Required for normal topology and maintenance of mitochondrial DNA (mtDNA) levels. Regulates mtDNA replication by re-activating replication after replication pausing. Likely to regulate replication pausing by coordinating with the mitochondrial termination factor mTTF which promotes replication pausing. Their function in replication pausing prevents unregulated replication that may occur for example by collisions between the machineries of DNA replication and transcription during mtDNA synthesis. This ensures the incorporation of RNA transcripts into replication intermediates at the replication fork and allows for proper fork progression. Possibly functions downstream of Dref which activates genes involved in mtDNA replication and maintenance. The sequence is that of Transcription termination factor 5, mitochondrial from Drosophila melanogaster (Fruit fly).